A 148-amino-acid polypeptide reads, in one-letter code: MAALTASCIDLNIQGNGAYSVLKQLATIALQNGFITDSHQFLQTLLLREKMHSTGFGSGVAVPHGKSACVKQPFVLFARKAQAIDWKASDGEDVNCWICLGVPQSGEEDQVKIIGTLCRKIIHKEFIHQLQQGDTDQVLALLNQTLSS.

The PTS EIIA type-2 domain maps to 2-145 (AALTASCIDL…DQVLALLNQT (144 aa)). Residue histidine 64 is the Tele-phosphohistidine intermediate of the active site. Phosphohistidine; by HPr is present on histidine 64.

Its subcellular location is the cytoplasm. Its function is as follows. The phosphoenolpyruvate-dependent sugar phosphotransferase system (sugar PTS), a major carbohydrate active transport system, catalyzes the phosphorylation of incoming sugar substrates concomitantly with their translocation across the cell membrane. The enzyme II FrvAB PTS system is involved in fructose transport. The chain is PTS system fructose-like EIIA component from Escherichia coli (strain K12).